We begin with the raw amino-acid sequence, 134 residues long: MIVGIGSDLIDIRRVEKTLERHGSRFRDRVFTEIEQRKSEGRKQRAASYAKRFAAKEACAKALGTGIAEGVFWRDMGVVNTPSGKPTMHLTGGAAKQLQKLLPAGTNAAIHLTITDDFPLAQAFVIIEALPVLE.

The Mg(2+) site is built by Asp-8 and Glu-57.

The protein belongs to the P-Pant transferase superfamily. AcpS family. Mg(2+) is required as a cofactor.

It localises to the cytoplasm. It catalyses the reaction apo-[ACP] + CoA = holo-[ACP] + adenosine 3',5'-bisphosphate + H(+). In terms of biological role, transfers the 4'-phosphopantetheine moiety from coenzyme A to a Ser of acyl-carrier-protein. The sequence is that of Holo-[acyl-carrier-protein] synthase from Brucella abortus (strain S19).